Consider the following 160-residue polypeptide: Transcription antitermination protein NusB (160 aa).

Belongs to the NusB family.

Involved in transcription antitermination. Required for transcription of ribosomal RNA (rRNA) genes. Binds specifically to the boxA antiterminator sequence of the ribosomal RNA (rrn) operons. The polypeptide is Transcription antitermination protein NusB (Gluconobacter oxydans (strain 621H) (Gluconobacter suboxydans)).